A 431-amino-acid chain; its full sequence is Adenylosuccinate lyase (431 aa).

N(6)-(1,2-dicarboxyethyl)-AMP contacts are provided by residues 4–5 (RY), 67–69 (RHD), and 93–94 (TS). H141 functions as the Proton donor/acceptor in the catalytic mechanism. Q212 contributes to the N(6)-(1,2-dicarboxyethyl)-AMP binding site. Catalysis depends on S262, which acts as the Proton donor/acceptor. N(6)-(1,2-dicarboxyethyl)-AMP-binding positions include S263, 268-270 (KRN), N276, and 307-311 (SAERI).

This sequence belongs to the lyase 1 family. Adenylosuccinate lyase subfamily. In terms of assembly, homodimer and homotetramer. Residues from neighboring subunits contribute catalytic and substrate-binding residues to each active site.

The catalysed reaction is N(6)-(1,2-dicarboxyethyl)-AMP = fumarate + AMP. It catalyses the reaction (2S)-2-[5-amino-1-(5-phospho-beta-D-ribosyl)imidazole-4-carboxamido]succinate = 5-amino-1-(5-phospho-beta-D-ribosyl)imidazole-4-carboxamide + fumarate. The protein operates within purine metabolism; AMP biosynthesis via de novo pathway; AMP from IMP: step 2/2. It participates in purine metabolism; IMP biosynthesis via de novo pathway; 5-amino-1-(5-phospho-D-ribosyl)imidazole-4-carboxamide from 5-amino-1-(5-phospho-D-ribosyl)imidazole-4-carboxylate: step 2/2. Its function is as follows. Catalyzes two reactions in de novo purine nucleotide biosynthesis. Catalyzes the breakdown of 5-aminoimidazole- (N-succinylocarboxamide) ribotide (SAICAR or 2-[5-amino-1-(5-phospho-beta-D-ribosyl)imidazole-4-carboxamido]succinate) to 5-aminoimidazole-4-carboxamide ribotide (AICAR or 5-amino-1-(5-phospho-beta-D-ribosyl)imidazole-4-carboxamide) and fumarate, and of adenylosuccinate (ADS or N(6)-(1,2-dicarboxyethyl)-AMP) to adenosine monophosphate (AMP) and fumarate. In Staphylococcus saprophyticus subsp. saprophyticus (strain ATCC 15305 / DSM 20229 / NCIMB 8711 / NCTC 7292 / S-41), this protein is Adenylosuccinate lyase (purB).